Consider the following 124-residue polypeptide: Fluoride-specific ion channel FluC (124 aa).

4 consecutive transmembrane segments (helical) span residues 6 to 26 (FAVA…ATWV), 34 to 54 (FYLA…YLYA), 69 to 89 (ALII…LDAL), and 101 to 121 (FAYV…GLAL). 2 residues coordinate Na(+): Gly76 and Thr79.

It belongs to the fluoride channel Fluc/FEX (TC 1.A.43) family.

The protein localises to the cell inner membrane. It catalyses the reaction fluoride(in) = fluoride(out). With respect to regulation, na(+) is not transported, but it plays an essential structural role and its presence is essential for fluoride channel function. In terms of biological role, fluoride-specific ion channel. Important for reducing fluoride concentration in the cell, thus reducing its toxicity. The sequence is that of Fluoride-specific ion channel FluC from Stutzerimonas stutzeri (strain A1501) (Pseudomonas stutzeri).